The following is an 83-amino-acid chain: Omega-agatoxin-Aa4b (83 aa).

Positions M1–A20 are cleaved as a signal peptide. A propeptide spanning residues T21–R35 is cleaved from the precursor. 4 disulfides stabilise this stretch: C39/C55, C47/C60, C54/C71, and C62/C69. S81 is modified (D-serine (Ser)).

Belongs to the neurotoxin 02 (plectoxin) family. 03 (omega-agtx) subfamily. In terms of processing, the toxin with D-Ser (named omega-aga IVC) is 80-90 fold more potent than that with L-Ser (omega-aga IVB) against Cav2.1/CACNA1A (P-type) channels in rat cerebellar Purkinje neurons and is more resistant to proteases. The epimerization is done by the venom peptide isomerase heterodimer. Expressed by the venom gland.

The protein localises to the secreted. Antagonist of voltage-gated Cav2.1/CACNA1A (P-type) calcium channels. Paralyzes insect by blocking neuromuscular transmission. In Agelenopsis aperta (North American funnel-web spider), this protein is Omega-agatoxin-Aa4b.